We begin with the raw amino-acid sequence, 353 residues long: MTDRFQQLLASIKPVDMNLTSAVKAHLDDLTKPQGSLGRLEEIAMKYCIATGTSKPSLSKKKVFCFAGDHGVAAEGVSAFPAEVTPQMVYNMLGGGAAINVLSRHAGADLEVVDMGVNHDFAEHPMLRRCKVKHGSANMAEGPAMSIDETLQAIMAGAELAIEAREQGYELLATGEMGIANTTPATALYSVLLDMSVNAITGRGTGIDDERLHHKIAVIEKAIEVNRANLATPLEVLAALGGFEIAGICGLILGAASVGMPVVVDGFISSSAAVCAIKLSCKVSDYLFFSHLSNEQGHRAVMQKLGARPILDLDLRLGEGTGAAMAMQVIEASLKIYNEMATFSSAGVSGKND.

E319 serves as the catalytic Proton acceptor.

The protein belongs to the CobT family.

The enzyme catalyses 5,6-dimethylbenzimidazole + nicotinate beta-D-ribonucleotide = alpha-ribazole 5'-phosphate + nicotinate + H(+). It participates in nucleoside biosynthesis; alpha-ribazole biosynthesis; alpha-ribazole from 5,6-dimethylbenzimidazole: step 1/2. Its function is as follows. Catalyzes the synthesis of alpha-ribazole-5'-phosphate from nicotinate mononucleotide (NAMN) and 5,6-dimethylbenzimidazole (DMB). In Chlorobaculum parvum (strain DSM 263 / NCIMB 8327) (Chlorobium vibrioforme subsp. thiosulfatophilum), this protein is Nicotinate-nucleotide--dimethylbenzimidazole phosphoribosyltransferase.